We begin with the raw amino-acid sequence, 371 residues long: Assembly protein G7 (371 aa).

This sequence belongs to the chordopoxvirinae G7 family. Part of a complex composed of A30, G7, F10 kinase, A15, D2, D3, and J1. In terms of processing, phosphorylated on serines by F10 kinase, phosphorylation state is regulated by H1 phosphatase. Undergoes proteolytic processing during morphogenesis, probably required for the transformation of immature virions (IV) into mature virions (MV).

The protein localises to the host cytoplasm. Its subcellular location is the virion. In terms of biological role, late protein which is a part of a large complex required for early virion morphogenesis. This complex participates in the formation of virosomes and the incorporation of virosomal contents into nascent immature virions. This chain is Assembly protein G7, found in Variola virus (isolate Human/India/Ind3/1967) (VARV).